The primary structure comprises 805 residues: MNVPETRQSSIVVAIRVRPFTSMEKTRLVNEASGAEANFPGLGDSSLILPMSNNSDSDIDIDAEEGSTRSKRNSLLRRKVIRPEGIRKIVDCVDDRMLIFDPADRNPLNKVSDQVLNSMRARATKATASSINNSNATNKFSSQRRRHGGEIKFVFDKLFDETSSQARVYKETTSPLLDSVLDGFNSTVFAYGATGCGKTYTVSGTPSQPGIIFLAMEELFNKITDLKDEKDFEISLSYLEIYNERIRDLLKPETPSKRLVIREDTQNHIKVANLSYHHPNTVEDVMDLVVQGNINRTTSPTEANEVSSRSHAVLQIHIMQTNKLVDLTSQHTFATLSIIDLAGSERAAATRNRGIRLHEGANINRSLLALGNCINALCLNDGSRSCHIPYRDSKLTRLLKFSLGGNCKTVMIVCISPSSSHYDETLNTLKYANRAKEIKTKIIRNQQSLSRHVGSYLKMITEQKRQIEELREREEKMISLKLTKYKLNKEKIQLAINECVNRVQQTYAGVETYQVAKTLKSLILCKRRFLQMVKLEVDNLILLFEREESTAAEMQPVISNCRMISGQLYNKIHELEMKFDETDTLSSVIHQVHSIDLNKLREMEDWDETYDLVYLESCLNQISELQRNEILVNSSIMTEKLMSDPGLNSRFKFLSKWLMNRTPNIESIIQDLVHIDEEFESFARTFIANPDSNFTNTNINIINTTAADLAVPAETLQRQNFSQKKVKWTSPDLSPSPMIEPQPELEPELHQDQDAIASEVDVSMQDTTFNEQGPSTPSAPTTAVPRRKMRSSLLTHQSLLATARK.

Residues Ser10–Ile438 form the Kinesin motor domain. Gly192 to Thr199 provides a ligand contact to ATP. The stretch at Leu449 to Lys481 forms a coiled coil. A disordered region spans residues Asn720–Lys805. Polar residues predominate over residues Met764–Gly773. Positions Pro774 to Ala783 are enriched in low complexity. Over residues Ser792–Lys805 the composition is skewed to polar residues.

The protein belongs to the TRAFAC class myosin-kinesin ATPase superfamily. Kinesin family. Kinesin II subfamily.

It is found in the cytoplasm. It localises to the cytoskeleton. This is Kinesin-like protein KIP3 (KIP3) from Saccharomyces cerevisiae (strain ATCC 204508 / S288c) (Baker's yeast).